The chain runs to 226 residues: MNPIVINRLQRKLGYTFNHQELLQQALTHRSASSKHNERLEFLGDSILSYVIANALYHRFPRVDEGDMSRMRATLVRGNTLAELAREFELGECLRLGPGELKSGGFRRESILADTVEALIGGVFLDSDIQTVEKLILNWYQTRLDEISPGDKQKDPKTRLQEYLQGRHLPLPTYLVVQVRGEAHDQEFTIHCQVSGLSEPVVGTGSSRRKAEQAAAEQALKKLELE.

The RNase III domain occupies 6–128; it reads INRLQRKLGY…LIGGVFLDSD (123 aa). Glu-41 provides a ligand contact to Mg(2+). Asp-45 is a catalytic residue. Residues Asp-114 and Glu-117 each coordinate Mg(2+). Glu-117 is a catalytic residue. The 71-residue stretch at 155–225 folds into the DRBM domain; it reads DPKTRLQEYL…AEQALKKLEL (71 aa).

This sequence belongs to the ribonuclease III family. As to quaternary structure, homodimer. Mg(2+) serves as cofactor.

It localises to the cytoplasm. It carries out the reaction Endonucleolytic cleavage to 5'-phosphomonoester.. Digests double-stranded RNA. Involved in the processing of primary rRNA transcript to yield the immediate precursors to the large and small rRNAs (23S and 16S). Processes some mRNAs, and tRNAs when they are encoded in the rRNA operon. Processes pre-crRNA and tracrRNA of type II CRISPR loci if present in the organism. The polypeptide is Ribonuclease 3 (Escherichia coli O139:H28 (strain E24377A / ETEC)).